Consider the following 382-residue polypeptide: Kelch domain-containing protein 3 (382 aa).

5 Kelch repeats span residues 25–77 (RVYS…PYMR), 88–138 (TVFL…VLGK), 139–189 (TMYI…TMLG), 191–249 (HMYV…GYNG), and 251–301 (LYIF…IVGD).

In terms of assembly, component of a CRL2(KLHDC3) complex, also named ECS(KLHDC3) complex, composed of CUL2, Elongin BC (ELOB and ELOC), RBX1 and substrate-specific adapter KLHDC3. May form oligomers as a KLHDC3-ELOB-ELOC complex; this interaction is likely autoinhibitory for the E3 ligase complex.

It is found in the cytoplasm. It participates in protein modification; protein ubiquitination. Its function is as follows. Substrate-recognition component of a Cul2-RING (CRL2) E3 ubiquitin-protein ligase complex of the DesCEND (destruction via C-end degrons) pathway, which recognizes a C-degron located at the extreme C terminus of target proteins, leading to their ubiquitination and degradation. The C-degron recognized by the DesCEND pathway is usually a motif of less than ten residues and can be present in full-length proteins, truncated proteins or proteolytically cleaved forms. The CRL2(KLHDC3) complex specifically recognizes proteins with a glycine (Gly) at the C-terminus, leading to their ubiquitination and degradation: recognizes the C-terminal -Arg-(Xaa)n-Arg-Gly, -Arg-(Xaa)n-Lys-Gly, and -Arg-(Xaa)n-Gln-Gly degrons. The CRL2(KLHDC3) complex mediates ubiquitination and degradation of truncated SELENOV and SEPHS2 selenoproteins produced by failed UGA/Sec decoding, which end with a glycine. May be involved in meiotic recombination process. The polypeptide is Kelch domain-containing protein 3 (Bos taurus (Bovine)).